A 418-amino-acid polypeptide reads, in one-letter code: Serine hydroxymethyltransferase (418 aa).

(6S)-5,6,7,8-tetrahydrofolate is bound by residues Leu-121 and 125–127 (GHL). Residue Lys-230 is modified to N6-(pyridoxal phosphate)lysine. 356-358 (SPF) is a (6S)-5,6,7,8-tetrahydrofolate binding site.

The protein belongs to the SHMT family. As to quaternary structure, homodimer. Requires pyridoxal 5'-phosphate as cofactor.

It localises to the cytoplasm. It catalyses the reaction (6R)-5,10-methylene-5,6,7,8-tetrahydrofolate + glycine + H2O = (6S)-5,6,7,8-tetrahydrofolate + L-serine. Its pathway is one-carbon metabolism; tetrahydrofolate interconversion. The protein operates within amino-acid biosynthesis; glycine biosynthesis; glycine from L-serine: step 1/1. Functionally, catalyzes the reversible interconversion of serine and glycine with tetrahydrofolate (THF) serving as the one-carbon carrier. This reaction serves as the major source of one-carbon groups required for the biosynthesis of purines, thymidylate, methionine, and other important biomolecules. Also exhibits THF-independent aldolase activity toward beta-hydroxyamino acids, producing glycine and aldehydes, via a retro-aldol mechanism. The protein is Serine hydroxymethyltransferase of Alteromonas mediterranea (strain DSM 17117 / CIP 110805 / LMG 28347 / Deep ecotype).